Consider the following 114-residue polypeptide: Hydrogenase maturation factor HypA (114 aa).

His-2 contributes to the Ni(2+) binding site. Cys-73, Cys-76, Cys-89, and Cys-92 together coordinate Zn(2+).

It belongs to the HypA/HybF family.

Involved in the maturation of [NiFe] hydrogenases. Required for nickel insertion into the metal center of the hydrogenase. The chain is Hydrogenase maturation factor HypA from Caldanaerobacter subterraneus subsp. tengcongensis (strain DSM 15242 / JCM 11007 / NBRC 100824 / MB4) (Thermoanaerobacter tengcongensis).